The chain runs to 353 residues: UDP-3-O-acylglucosamine N-acyltransferase (353 aa).

Residue His-242 is the Proton acceptor of the active site.

The protein belongs to the transferase hexapeptide repeat family. LpxD subfamily. In terms of assembly, homotrimer.

The catalysed reaction is a UDP-3-O-[(3R)-3-hydroxyacyl]-alpha-D-glucosamine + a (3R)-hydroxyacyl-[ACP] = a UDP-2-N,3-O-bis[(3R)-3-hydroxyacyl]-alpha-D-glucosamine + holo-[ACP] + H(+). It functions in the pathway bacterial outer membrane biogenesis; LPS lipid A biosynthesis. Catalyzes the N-acylation of UDP-3-O-acylglucosamine using 3-hydroxyacyl-ACP as the acyl donor. Is involved in the biosynthesis of lipid A, a phosphorylated glycolipid that anchors the lipopolysaccharide to the outer membrane of the cell. This chain is UDP-3-O-acylglucosamine N-acyltransferase, found in Pseudomonas aeruginosa (strain UCBPP-PA14).